Here is an 85-residue protein sequence, read N- to C-terminus: Turripeptide PaIAa (85 aa).

Belongs to the turripeptide family. In terms of tissue distribution, expressed by the venom duct.

The protein localises to the secreted. Is lethal to drosophila larvae. In Polystira albida (White giant-turris), this protein is Turripeptide PaIAa.